A 387-amino-acid chain; its full sequence is Leucine aminopeptidase 1 (387 aa).

Residues methionine 1 to alanine 18 form the signal peptide. The propeptide occupies arginine 19–lysine 86. Asparagine 179 is a glycosylation site (N-linked (GlcNAc...) asparagine). Residues histidine 187, aspartate 206, glutamate 245, and aspartate 272 each coordinate Zn(2+). Cysteine 321 and cysteine 325 are disulfide-bonded. Histidine 354 provides a ligand contact to Zn(2+).

Belongs to the peptidase M28 family. M28E subfamily. In terms of assembly, monomer. Zn(2+) is required as a cofactor.

It is found in the secreted. Extracellular aminopeptidase that allows assimilation of proteinaceous substrates. This is Leucine aminopeptidase 1 (lap1) from Sclerotinia sclerotiorum (strain ATCC 18683 / 1980 / Ss-1) (White mold).